The chain runs to 904 residues: Serine/arginine repetitive matrix protein 1 (904 aa).

Met-1 is subject to N-acetylmethionine. The interval 1 to 151 is necessary for DNA and RNA-binding; it reads MDAGFFRGTS…ASMKKQDEDK (151 aa). A necessary for mRNA 3'-end cleavage and cytoplasmic accumulation region spans residues 1–156; the sequence is MDAGFFRGTS…QDEDKDKRDK (156 aa). Arg-7 bears the Citrulline mark. A PWI domain is found at 27-126; that stretch reads QLKFAECLEK…AGIPSAFLEL (100 aa). Lys-127 participates in a covalent cross-link: Glycyl lysine isopeptide (Lys-Gly) (interchain with G-Cter in SUMO2). Positions 139–170 are enriched in basic and acidic residues; the sequence is EKLASMKKQDEDKDKRDKEEKESSREKRERSR. The tract at residues 139–904 is disordered; sequence EKLASMKKQD…MRKAQVSPQS (766 aa). Lys-140 carries the N6-acetyllysine modification. A compositionally biased stretch (basic residues) spans 171-207; the sequence is SPRRRKSRSPSPRRRSSPVRRERKRSHSRSPRHRTKS. Over residues 214–234 the composition is skewed to basic and acidic residues; the sequence is PEKKEKTPELPEPSVKVKEPS. A Phosphothreonine modification is found at Thr-220. Position 227 is a phosphoserine (Ser-227). Lys-231 is covalently cross-linked (Glycyl lysine isopeptide (Lys-Gly) (interchain with G-Cter in SUMO1); alternate). Lys-231 participates in a covalent cross-link: Glycyl lysine isopeptide (Lys-Gly) (interchain with G-Cter in SUMO2); alternate. Ser-234 and Ser-240 each carry phosphoserine. A Phosphothreonine modification is found at Thr-241. A compositionally biased stretch (basic and acidic residues) spans 246 to 275; sequence KVPKPEPIPEPKEPSPEKNSKKEKEKEKTR. A Glycyl lysine isopeptide (Lys-Gly) (interchain with G-Cter in SUMO2) cross-link involves residue Lys-249. A Phosphoserine modification is found at Ser-260. Composition is skewed to basic residues over residues 276–329 and 336–351; these read PRSR…RTPP and PRHRRSRSPVRRRRRS. The segment at 300–688 is necessary for speckles and matrix localization; it reads RRHRSRSRSY…NKRHSPSPRP (389 aa). Positions 352 to 368 are enriched in low complexity; the sequence is SASLSGSSSSSSSSRSR. Ser-389, Ser-391, Ser-393, and Ser-402 each carry phosphoserine. Residue Thr-406 is modified to Phosphothreonine. Position 414 is a phosphoserine (Ser-414). Thr-416 is subject to Phosphothreonine. Ser-420, Ser-429, Ser-431, and Ser-436 each carry phosphoserine. Residues 428–438 show a composition bias toward polar residues; that stretch reads VSVSPGRTSGK. Residue Lys-447 forms a Glycyl lysine isopeptide (Lys-Gly) (interchain with G-Cter in SUMO2) linkage. A phosphoserine mark is found at Ser-450 and Ser-452. A Glycyl lysine isopeptide (Lys-Gly) (interchain with G-Cter in SUMO2) cross-link involves residue Lys-459. 2 positions are modified to phosphoserine: Ser-463 and Ser-465. Residue Lys-472 forms a Glycyl lysine isopeptide (Lys-Gly) (interchain with G-Cter in SUMO2) linkage. Residue Ser-478 is modified to Phosphoserine. Over residues 478–501 the composition is skewed to low complexity; it reads SVQQRRQYRRQNQQSSSDSGSSSS. The segment covering 503–518 has biased composition (basic and acidic residues); sequence EDERPKRSHVKNGEVG. Phosphoserine occurs at positions 524, 526, 528, 530, 532, 549, and 551. The segment covering 533–560 has biased composition (basic residues); that stretch reads PRKRQKETSPRGRRRRSPSPPPTRRRRS. Thr-555 bears the Phosphothreonine mark. Residues Ser-560 and Ser-562 each carry the phosphoserine modification. The segment covering 567–592 has biased composition (basic residues); sequence PRRRRTPTPPPRRRTPSPPPRRRSPS. Residues Thr-572, Thr-574, and Thr-581 each carry the phosphothreonine modification. Ser-583 is subject to Phosphoserine. The segment covering 593–605 has biased composition (low complexity); the sequence is PRRYSPPIQRRYS. Position 596 is a phosphotyrosine (Tyr-596). 3 positions are modified to phosphoserine: Ser-597, Ser-605, and Ser-607. Thr-614 carries the phosphothreonine modification. A phosphoserine mark is found at Ser-616, Ser-626, Ser-628, Ser-636, and Ser-638. Positions 621–636 are enriched in basic residues; sequence PKRRASPSPPPKRRVS. The span at 649 to 663 shows a compositional bias: basic residues; that stretch reads TKRRSPSLSSKHRKG. 7 positions are modified to phosphoserine: Ser-694, Ser-695, Ser-696, Ser-705, Ser-707, Ser-713, and Ser-715. Low complexity-rich tracts occupy residues 701 to 719 and 736 to 759; these read RRGASSSPQRRQSPSPSTR and AASPSPQSVRRVSSSRSVSGSPEP. Thr-718 is modified (phosphothreonine). Phosphoserine is present on residues Ser-738, Ser-740, Ser-748, Ser-752, Ser-754, Ser-756, Ser-769, Ser-773, Ser-775, and Ser-777. Residues 771–786 are compositionally biased toward low complexity; sequence VQSQSPSTNWSPAVPV. Thr-778 is subject to Phosphothreonine. 2 positions are modified to phosphoserine: Ser-781 and Ser-791. Position 793 is a phosphothreonine (Thr-793). Ser-795, Ser-797, and Ser-802 each carry phosphoserine. Over residues 809–834 the composition is skewed to basic residues; it reads KKKKKKKDKKHKKDKKHKKHKKHKKE. A compositionally biased stretch (low complexity) spans 837–866; the sequence is VAAAAAAAVTPAAIAAATTTLAQEEPVAAP. A Glycyl lysine isopeptide (Lys-Gly) (interchain with G-Cter in SUMO2) cross-link involves residue Lys-869. At Thr-872 the chain carries Phosphothreonine. Position 874 is a phosphoserine (Ser-874). The segment covering 882 to 892 has biased composition (basic and acidic residues); that stretch reads DLEKHLREKAL. Ser-901 is modified (phosphoserine).

This sequence belongs to the splicing factor SR family. Identified in the spliceosome C complex. Found in a pre-mRNA splicing complex with SFRS4, SFRS5, SNRP70, SNRPA1, SRRM1 and SRRM2. Found in a pre-mRNA exonic splicing enhancer (ESE) complex with SNRP70, SNRPA1, SRRM1 and TRA2B/SFRS10. Component of the minor spliceosome, which splices U12-type introns. Found in a mRNA splicing-dependent exon junction complex (EJC) with DEK, PRPF8, NCBP1, RBM8A, RNPS1, SRRM1 and ALYREF/THOC4. Interacts with DDX39B, CPSF1, RBM8A, RNPS1, and ALYREF/THOC4. Seems to be a compound of RNA export complexes that are released from speckles in a ATP-dependent manner. In terms of processing, phosphorylated on multiple serine and threonine residues by DYRK3 during the G2-to-M transition, after the nuclear-envelope breakdown. Phosphorylation by DYRK3 promotes disassembly of nuclear speckles. Post-translationally, citrullinated by PADI4.

The protein resides in the nucleus matrix. The protein localises to the nucleus speckle. Part of pre- and post-splicing multiprotein mRNP complexes. As a component of the minor spliceosome, involved in the splicing of U12-type introns in pre-mRNAs. Involved in numerous pre-mRNA processing events. Promotes constitutive and exonic splicing enhancer (ESE)-dependent splicing activation by bridging together sequence-specific (SR family proteins, SFRS4, SFRS5 and TRA2B/SFRS10) and basal snRNP (SNRP70 and SNRPA1) factors of the spliceosome. Stimulates mRNA 3'-end cleavage independently of the formation of an exon junction complex. Binds both pre-mRNA and spliced mRNA 20-25 nt upstream of exon-exon junctions. Binds RNA and DNA with low sequence specificity and has similar preference for either double- or single-stranded nucleic acid substrates. The protein is Serine/arginine repetitive matrix protein 1 (SRRM1) of Homo sapiens (Human).